The sequence spans 149 residues: 3-hydroxyacyl-[acyl-carrier-protein] dehydratase FabZ (149 aa).

Residue His-53 is part of the active site.

It belongs to the thioester dehydratase family. FabZ subfamily.

It localises to the cytoplasm. It carries out the reaction a (3R)-hydroxyacyl-[ACP] = a (2E)-enoyl-[ACP] + H2O. In terms of biological role, involved in unsaturated fatty acids biosynthesis. Catalyzes the dehydration of short chain beta-hydroxyacyl-ACPs and long chain saturated and unsaturated beta-hydroxyacyl-ACPs. This Neisseria gonorrhoeae (strain ATCC 700825 / FA 1090) protein is 3-hydroxyacyl-[acyl-carrier-protein] dehydratase FabZ.